The primary structure comprises 388 residues: Succinate--CoA ligase [ADP-forming] subunit beta (388 aa).

One can recognise an ATP-grasp domain in the interval 9–244 (KQLFAEFGLP…PSQEDKREAH (236 aa)). Residues Lys46, 53 to 55 (GRG), Glu99, Ser102, and Glu107 each bind ATP. 2 residues coordinate Mg(2+): Asn199 and Asp213. Residues Asn264 and 321–323 (GIV) each bind substrate.

The protein belongs to the succinate/malate CoA ligase beta subunit family. As to quaternary structure, heterotetramer of two alpha and two beta subunits. Mg(2+) serves as cofactor.

The catalysed reaction is succinate + ATP + CoA = succinyl-CoA + ADP + phosphate. The enzyme catalyses GTP + succinate + CoA = succinyl-CoA + GDP + phosphate. It participates in carbohydrate metabolism; tricarboxylic acid cycle; succinate from succinyl-CoA (ligase route): step 1/1. Its function is as follows. Succinyl-CoA synthetase functions in the citric acid cycle (TCA), coupling the hydrolysis of succinyl-CoA to the synthesis of either ATP or GTP and thus represents the only step of substrate-level phosphorylation in the TCA. The beta subunit provides nucleotide specificity of the enzyme and binds the substrate succinate, while the binding sites for coenzyme A and phosphate are found in the alpha subunit. The protein is Succinate--CoA ligase [ADP-forming] subunit beta of Vibrio vulnificus (strain CMCP6).